A 266-amino-acid polypeptide reads, in one-letter code: Glucosamine-6-phosphate deaminase (266 aa).

Residue Asp72 is the Proton acceptor; for enolization step of the active site. Asp141 acts as the For ring-opening step in catalysis. His143 (proton acceptor; for ring-opening step) is an active-site residue. Residue Glu148 is the For ring-opening step of the active site.

It belongs to the glucosamine/galactosamine-6-phosphate isomerase family. NagB subfamily. As to quaternary structure, homohexamer.

It catalyses the reaction alpha-D-glucosamine 6-phosphate + H2O = beta-D-fructose 6-phosphate + NH4(+). The protein operates within amino-sugar metabolism; N-acetylneuraminate degradation; D-fructose 6-phosphate from N-acetylneuraminate: step 5/5. Its activity is regulated as follows. Allosterically activated by N-acetylglucosamine 6-phosphate (GlcNAc6P). Functionally, catalyzes the reversible isomerization-deamination of glucosamine 6-phosphate (GlcN6P) to form fructose 6-phosphate (Fru6P) and ammonium ion. The sequence is that of Glucosamine-6-phosphate deaminase from Vibrio campbellii (strain ATCC BAA-1116).